The sequence spans 489 residues: E3 ubiquitin-protein ligase RGLG1 (489 aa).

Basic and acidic residues predominate over residues M1–S10. Residues M1–K125 are disordered. G2 carries N-myristoyl glycine lipidation. A compositionally biased stretch (low complexity) spans S11–S23. The segment covering Y34 to S57 has biased composition (pro residues). The span at P58–P75 shows a compositional bias: low complexity. A compositionally biased stretch (pro residues) spans N76–S88. Positions N156–L376 constitute a VWFA domain. An RING-type zinc finger spans residues C446–R479.

In terms of assembly, interacts with the heterodimer UBC35/UEV1B. Interacts with ERF053. Interacts with PP2CA. N-myristoylated. Ubiquitously expressed.

The protein localises to the cell membrane. It is found in the nucleus. It catalyses the reaction S-ubiquitinyl-[E2 ubiquitin-conjugating enzyme]-L-cysteine + [acceptor protein]-L-lysine = [E2 ubiquitin-conjugating enzyme]-L-cysteine + N(6)-ubiquitinyl-[acceptor protein]-L-lysine.. In terms of biological role, E3 ubiquitin-protein ligase that mediates the formation of 'Lys-63'-linked ubiquitin chains. Regulates apical dominance by acting on the auxin transport proteins abundance. Together with RGLG5, mediates the ubiquitination and subsequent proteasomal degradation of the target protein PP2CA. Functions as a positive regulator of abscisic acid (ABA) signaling through ABA-dependent degradation of PP2CA, a major inhibitor of ABA signaling. Acts as a negative regulator of drought stress response. The polypeptide is E3 ubiquitin-protein ligase RGLG1 (Arabidopsis thaliana (Mouse-ear cress)).